The primary structure comprises 279 residues: Methylthioribulose-1-phosphate dehydratase (279 aa).

Position 132 (cysteine 132) interacts with substrate. 2 residues coordinate Zn(2+): histidine 150 and histidine 152. The active-site Proton donor/acceptor is glutamate 175. Zn(2+) is bound at residue histidine 240.

This sequence belongs to the aldolase class II family. MtnB subfamily. Zn(2+) serves as cofactor.

It localises to the cytoplasm. The catalysed reaction is 5-(methylsulfanyl)-D-ribulose 1-phosphate = 5-methylsulfanyl-2,3-dioxopentyl phosphate + H2O. Its pathway is amino-acid biosynthesis; L-methionine biosynthesis via salvage pathway; L-methionine from S-methyl-5-thio-alpha-D-ribose 1-phosphate: step 2/6. Its function is as follows. Catalyzes the dehydration of methylthioribulose-1-phosphate (MTRu-1-P) into 2,3-diketo-5-methylthiopentyl-1-phosphate (DK-MTP-1-P). This Candida tropicalis (strain ATCC MYA-3404 / T1) (Yeast) protein is Methylthioribulose-1-phosphate dehydratase.